A 683-amino-acid polypeptide reads, in one-letter code: Methionine--tRNA ligase (683 aa).

Residues 23 to 33 carry the 'HIGH' region motif; that stretch reads PYANGSAHIGH. Cys-154, Cys-157, Cys-166, and Cys-170 together coordinate Zn(2+). Positions 335 to 339 match the 'KMSKS' region motif; it reads KFSKS. Lys-338 is an ATP binding site. A tRNA-binding domain is found at 583 to 683; the sequence is DFAKMELRVG…KPSEPGTKVR (101 aa).

Belongs to the class-I aminoacyl-tRNA synthetase family. MetG type 1 subfamily. As to quaternary structure, homodimer. It depends on Zn(2+) as a cofactor.

The protein localises to the cytoplasm. It catalyses the reaction tRNA(Met) + L-methionine + ATP = L-methionyl-tRNA(Met) + AMP + diphosphate. Functionally, is required not only for elongation of protein synthesis but also for the initiation of all mRNA translation through initiator tRNA(fMet) aminoacylation. The chain is Methionine--tRNA ligase from Methanocella arvoryzae (strain DSM 22066 / NBRC 105507 / MRE50).